The sequence spans 554 residues: DNA ligase (554 aa).

ATP is bound at residue Glu-253. The active-site N6-AMP-lysine intermediate is the Lys-255. Positions 260, 275, 304, 344, 418, and 424 each coordinate ATP.

The protein belongs to the ATP-dependent DNA ligase family. Mg(2+) is required as a cofactor.

It carries out the reaction ATP + (deoxyribonucleotide)n-3'-hydroxyl + 5'-phospho-(deoxyribonucleotide)m = (deoxyribonucleotide)n+m + AMP + diphosphate.. Its function is as follows. DNA ligase that seals nicks in double-stranded DNA during DNA replication, DNA recombination and DNA repair. The chain is DNA ligase from Haloarcula marismortui (strain ATCC 43049 / DSM 3752 / JCM 8966 / VKM B-1809) (Halobacterium marismortui).